A 293-amino-acid chain; its full sequence is Ribosomal protein L11 methyltransferase (293 aa).

S-adenosyl-L-methionine is bound by residues threonine 145, glycine 166, aspartate 188, and asparagine 230.

Belongs to the methyltransferase superfamily. PrmA family.

It is found in the cytoplasm. The catalysed reaction is L-lysyl-[protein] + 3 S-adenosyl-L-methionine = N(6),N(6),N(6)-trimethyl-L-lysyl-[protein] + 3 S-adenosyl-L-homocysteine + 3 H(+). Functionally, methylates ribosomal protein L11. The protein is Ribosomal protein L11 methyltransferase of Shewanella sediminis (strain HAW-EB3).